We begin with the raw amino-acid sequence, 62 residues long: Large ribosomal subunit protein eL24 (62 aa).

Positions 6, 9, 32, and 36 each coordinate Zn(2+). Residues 6–36 (CSFCEGTIEPGCGKKYVKKDGSVMHFCSSKC) form a C4-type zinc finger.

The protein belongs to the eukaryotic ribosomal protein eL24 family. In terms of assembly, part of the 50S ribosomal subunit. Forms a cluster with proteins L3 and L14. The cofactor is Zn(2+).

Its function is as follows. Binds to the 23S rRNA. The sequence is that of Large ribosomal subunit protein eL24 from Methanococcus maripaludis (strain C5 / ATCC BAA-1333).